Consider the following 560-residue polypeptide: SWI/SNF complex subunit SWI3A homolog (560 aa).

Positions 1 to 13 (MSPPVAGAASSGD) are enriched in low complexity. A disordered region spans residues 1 to 22 (MSPPVAGAASSGDGPPGRPPRE). Residues 24-127 (YTIPASSGWF…FSASPSRPEA (104 aa)) form the SWIRM domain. An SANT domain is found at 242–293 (HSSSAWTDAETLLLLEGVLKHGDDWDLIAQHVRTKNKSECIARLIQLPFGEH). Residues 311–330 (TTDGKVNKSTVKESSSQPTE) are compositionally biased toward polar residues. 2 disordered regions span residues 311 to 352 (TTDG…EEHP) and 414 to 445 (QTRA…PDKK). A compositionally biased stretch (acidic residues) spans 331-342 (TVDDMQIDGNED). Composition is skewed to basic and acidic residues over residues 343–352 (GADKSVEEHP) and 424–445 (RQSD…PDKK).

Interacts with LFR.

Its subcellular location is the nucleus. Functionally, component of a multiprotein complex equivalent of the SWI/SNF complex, an ATP-dependent chromatin-remodeling complex, which is required for the positive and negative regulation of gene expression of a large number of genes. It changes chromatin structure by altering DNA-histone contacts within a nucleosome, leading eventually to a change in nucleosome position, thus facilitating or repressing binding of gene-specific transcription factors. This Oryza sativa subsp. japonica (Rice) protein is SWI/SNF complex subunit SWI3A homolog.